The chain runs to 228 residues: DOPA 4,5-dioxygenase (228 aa).

Homodimer. As to expression, expressed at high level in coloured cap tissue and at least 10 times lower level in the stipe.

The protein resides in the cytoplasm. It functions in the pathway pigment biosynthesis; betalain biosynthesis. Functionally, extradiol dioxygenase that opens up the cyclic ring of DOPA between carbons 4 and 5 thus producing an unstable seco-DOPA that rearranges non-enzymatically to betalamic acid. Can also catalyze the formation of muscaflavin (a pigment found in the hygrocybe mushrooms family and of some amanita species only) by a 2,3-extradiol cleavage of DOPA. This is DOPA 4,5-dioxygenase (DODA) from Amanita muscaria (Fly agaric).